The chain runs to 144 residues: Small ribosomal subunit protein uS11c (144 aa).

This sequence belongs to the universal ribosomal protein uS11 family. Part of the 30S ribosomal subunit.

The protein localises to the plastid. The protein resides in the chloroplast. This is Small ribosomal subunit protein uS11c from Oenothera biennis (German evening primrose).